The following is a 145-amino-acid chain: 3-hydroxyacyl-[acyl-carrier-protein] dehydratase FabZ (145 aa).

His-51 is an active-site residue.

This sequence belongs to the thioester dehydratase family. FabZ subfamily.

The protein resides in the cytoplasm. It carries out the reaction a (3R)-hydroxyacyl-[ACP] = a (2E)-enoyl-[ACP] + H2O. Involved in unsaturated fatty acids biosynthesis. Catalyzes the dehydration of short chain beta-hydroxyacyl-ACPs and long chain saturated and unsaturated beta-hydroxyacyl-ACPs. This Staphylococcus epidermidis (strain ATCC 35984 / DSM 28319 / BCRC 17069 / CCUG 31568 / BM 3577 / RP62A) protein is 3-hydroxyacyl-[acyl-carrier-protein] dehydratase FabZ.